The chain runs to 307 residues: Acyl transferase (307 aa).

Catalysis depends on charge relay system residues Ser-116, Asp-213, and His-243.

It belongs to the LuxD family.

The protein operates within lipid metabolism; fatty acid reduction for biolumincescence. Functionally, acyl transferase is part of the fatty acid reductase system required for aldehyde biosynthesis; it produces fatty acids for the luminescent reaction. The protein is Acyl transferase of Photorhabdus luminescens (Xenorhabdus luminescens).